A 372-amino-acid polypeptide reads, in one-letter code: Cytochrome b (372 aa).

The next 4 membrane-spanning stretches (helical) occupy residues 25-45, 69-90, 105-125, and 170-190; these read FGSM…FLAI, WTMQ…YIHI, WLSG…GYVL, and FFAL…IHII. Heme b contacts are provided by His-75 and His-89. Heme b is bound by residues His-174 and His-188. Residue His-193 participates in a ubiquinone binding. 4 helical membrane passes run 218 to 238, 280 to 300, 312 to 332, and 339 to 358; these read YKDI…MAFA, LGGT…PFTH, LAQM…WTAT, and FILI…IINP.

Belongs to the cytochrome b family. The cytochrome bc1 complex contains 3 respiratory subunits (MT-CYB, CYC1 and UQCRFS1), 2 core proteins (UQCRC1 and UQCRC2) and probably 6 low-molecular weight proteins. The cofactor is heme b.

It localises to the mitochondrion inner membrane. Functionally, component of the ubiquinol-cytochrome c reductase complex (complex III or cytochrome b-c1 complex) that is part of the mitochondrial respiratory chain. The b-c1 complex mediates electron transfer from ubiquinol to cytochrome c. Contributes to the generation of a proton gradient across the mitochondrial membrane that is then used for ATP synthesis. The sequence is that of Cytochrome b (MT-CYB) from Acanthophis antarcticus (Common death adder).